The chain runs to 208 residues: FMN-dependent NADH:quinone oxidoreductase 1 (208 aa).

This sequence belongs to the azoreductase type 1 family. As to quaternary structure, homodimer. Requires FMN as cofactor.

It carries out the reaction 2 a quinone + NADH + H(+) = 2 a 1,4-benzosemiquinone + NAD(+). It catalyses the reaction N,N-dimethyl-1,4-phenylenediamine + anthranilate + 2 NAD(+) = 2-(4-dimethylaminophenyl)diazenylbenzoate + 2 NADH + 2 H(+). Quinone reductase that provides resistance to thiol-specific stress caused by electrophilic quinones. Its function is as follows. Also exhibits azoreductase activity. Catalyzes the reductive cleavage of the azo bond in aromatic azo compounds to the corresponding amines. The chain is FMN-dependent NADH:quinone oxidoreductase 1 from Bacillus thuringiensis subsp. konkukian (strain 97-27).